The following is a 122-amino-acid chain: ATP-dependent Clp protease adapter protein ClpS (122 aa).

This sequence belongs to the ClpS family. Binds to the N-terminal domain of the chaperone ClpA.

Its function is as follows. Involved in the modulation of the specificity of the ClpAP-mediated ATP-dependent protein degradation. The protein is ATP-dependent Clp protease adapter protein ClpS of Pseudomonas fluorescens (strain SBW25).